A 538-amino-acid polypeptide reads, in one-letter code: Chaperonin GroEL (538 aa).

ATP is bound by residues 29-32 (TLGP), 86-90 (DGTTT), Gly413, 479-481 (DAL), and Asp495.

Belongs to the chaperonin (HSP60) family. As to quaternary structure, forms a cylinder of 14 subunits composed of two heptameric rings stacked back-to-back. Interacts with the co-chaperonin GroES.

The protein localises to the cytoplasm. The enzyme catalyses ATP + H2O + a folded polypeptide = ADP + phosphate + an unfolded polypeptide.. Together with its co-chaperonin GroES, plays an essential role in assisting protein folding. The GroEL-GroES system forms a nano-cage that allows encapsulation of the non-native substrate proteins and provides a physical environment optimized to promote and accelerate protein folding. The polypeptide is Chaperonin GroEL (Thermotoga neapolitana).